The chain runs to 674 residues: Protein kinase C delta type (674 aa).

A C2 domain is found at 1-106; the sequence is MAPFLRISFN…KNNGKAEFWL (106 aa). Thr-43 and Thr-50 each carry phosphothreonine. Tyr-64 carries the phosphotyrosine modification. Residue Ser-130 is modified to Phosphoserine. Phosphothreonine is present on Thr-141. Residue Tyr-155 is modified to Phosphotyrosine. The Phorbol-ester/DAG-type 1 zinc finger occupies 158–208; it reads NHEFIATFFGQPTFCSVCKEFVWGLNKQGYKCRQCNAAIHKKCIDKIIGRC. Position 218 is a phosphothreonine (Thr-218). The segment at 230–280 adopts a Phorbol-ester/DAG-type 2 zinc-finger fold; the sequence is PHRFKVYNYMSPTFCDHCGSLLWGLVKQGLKCEDCGMNVHHKCREKVANLC. Ser-299 carries the phosphoserine; by autocatalysis modification. 2 positions are modified to phosphotyrosine; by SRC: Tyr-311 and Tyr-332. Positions 347–601 constitute a Protein kinase domain; the sequence is FTFQKVLGKG…TGNIRIHPFF (255 aa). 353–361 is a binding site for ATP; the sequence is LGKGSFGKV. Tyr-372 carries the post-translational modification Phosphotyrosine. Lys-376 serves as a coordination point for ATP. Phosphothreonine is present on Thr-449. The Proton acceptor role is filled by Asp-471. Ser-504 is subject to Phosphoserine. Phosphothreonine; by autocatalysis is present on Thr-505. Phosphotyrosine is present on Tyr-565. The AGC-kinase C-terminal domain occupies 602–673; it reads KTINWSLLEK…VNPKFEQFLD (72 aa). A phosphoserine mark is found at Ser-643, Ser-652, and Ser-662.

This sequence belongs to the protein kinase superfamily. AGC Ser/Thr protein kinase family. PKC subfamily. As to quaternary structure, interacts with PDPK1 (via N-terminal region). Interacts with RAD9A. Interacts with CDCP1. Interacts with MUC1. Interacts with VASP. Interacts with CAVIN3. Interacts with PRKD2 (via N-terminus and zing-finger domain 1 and 2) in response to oxidative stress; the interaction is independent of PRKD2 tyrosine phosphorylation. Interacts with PLSC3; interaction is enhanced by UV irradiation. Autophosphorylated and/or phosphorylated at Thr-505, within the activation loop; phosphorylation at Thr-505 is not a prerequisite for enzymatic activity. Autophosphorylated at Ser-299. Upon TNFSF10/TRAIL treatment, phosphorylated at Tyr-155; phosphorylation is required for its translocation to the endoplasmic reticulum and cleavage by caspase-3. Phosphorylated at Tyr-311, Tyr-332 and Tyr-565; phosphorylation of Tyr-311 and Tyr-565 following thrombin or zymosan stimulation potentiates its kinase activity. Phosphorylated by protein kinase PDPK1; phosphorylation is inhibited by the apoptotic C-terminal cleavage product of PKN2. Phosphorylated at Tyr-311 through a SYK and SRC mechanism downstream of C-type lectin receptors activation, promoting its activation. In terms of processing, proteolytically cleaved into a catalytic subunit and a regulatory subunit by caspase-3 during apoptosis which results in kinase activation. In terms of tissue distribution, isoform 1 is highly expressed in developing pro- and pre-B-cells and moderately in mature T-cells. Isoform 2 is highly expressed in testis and ovary and at a lower level in thymocytes, brain and kidney.

Its subcellular location is the cytoplasm. It localises to the perinuclear region. The protein localises to the nucleus. The protein resides in the cell membrane. It is found in the mitochondrion. Its subcellular location is the endomembrane system. It catalyses the reaction L-seryl-[protein] + ATP = O-phospho-L-seryl-[protein] + ADP + H(+). It carries out the reaction L-threonyl-[protein] + ATP = O-phospho-L-threonyl-[protein] + ADP + H(+). The catalysed reaction is L-tyrosyl-[protein] + ATP = O-phospho-L-tyrosyl-[protein] + ADP + H(+). Novel PKCs (PRKCD, PRKCE, PRKCH and PRKCQ) are calcium-insensitive, but activated by diacylglycerol (DAG) and phosphatidylserine. Three specific sites; Thr-505 (activation loop of the kinase domain), Ser-643 (turn motif) and Ser-662 (hydrophobic region), need to be phosphorylated for its full activation. Activated by caspase-3 (CASP3) cleavage during apoptosis. After cleavage, the pseudosubstrate motif in the regulatory subunit is released from the substrate recognition site of the catalytic subunit, which enables PRKCD to become constitutively activated. The catalytic subunit which displays properties of a sphingosine-dependent protein kinase is activated by D-erythro-sphingosine (Sph) or N,N-dimethyl-D-erythrosphingosine (DMS) or N,N,N-trimethyl-D-erythrosphingosine (TMS), but not by ceramide or Sph-1-P and is strongly inhibited by phosphatidylserine. Its function is as follows. Calcium-independent, phospholipid- and diacylglycerol (DAG)-dependent serine/threonine-protein kinase that plays contrasting roles in cell death and cell survival by functioning as a pro-apoptotic protein during DNA damage-induced apoptosis, but acting as an anti-apoptotic protein during cytokine receptor-initiated cell death, is involved in tumor suppression, is required for oxygen radical production by NADPH oxidase and acts as a positive or negative regulator in platelet functional responses. Negatively regulates B cell proliferation and also has an important function in self-antigen induced B cell tolerance induction. Upon DNA damage, activates the promoter of the death-promoting transcription factor BCLAF1/Btf to trigger BCLAF1-mediated p53/TP53 gene transcription and apoptosis. In response to oxidative stress, interact with and activate CHUK/IKKA in the nucleus, causing the phosphorylation of p53/TP53. In the case of ER stress or DNA damage-induced apoptosis, can form a complex with the tyrosine-protein kinase ABL1 which trigger apoptosis independently of p53/TP53. In cytosol can trigger apoptosis by activating MAPK11 or MAPK14, inhibiting AKT1 and decreasing the level of X-linked inhibitor of apoptosis protein (XIAP), whereas in nucleus induces apoptosis via the activation of MAPK8 or MAPK9. Upon ionizing radiation treatment, is required for the activation of the apoptosis regulators BAX and BAK, which trigger the mitochondrial cell death pathway. Can phosphorylate MCL1 and target it for degradation which is sufficient to trigger for BAX activation and apoptosis. Is required for the control of cell cycle progression both at G1/S and G2/M phases. Mediates phorbol 12-myristate 13-acetate (PMA)-induced inhibition of cell cycle progression at G1/S phase by up-regulating the CDK inhibitor CDKN1A/p21 and inhibiting the cyclin CCNA2 promoter activity. In response to UV irradiation can phosphorylate CDK1, which is important for the G2/M DNA damage checkpoint activation. Can protect glioma cells from the apoptosis induced by TNFSF10/TRAIL, probably by inducing increased phosphorylation and subsequent activation of AKT1. Can also act as tumor suppressor upon mitogenic stimulation with PMA or TPA. In N-formyl-methionyl-leucyl-phenylalanine (fMLP)-treated cells, is required for NCF1 (p47-phox) phosphorylation and activation of NADPH oxidase activity, and regulates TNF-elicited superoxide anion production in neutrophils, by direct phosphorylation and activation of NCF1 or indirectly through MAPK1/3 (ERK1/2) signaling pathways. Involved in antifungal immunity by mediating phosphorylation and activation of CARD9 downstream of C-type lectin receptors activation, promoting interaction between CARD9 and BCL10, followed by activation of NF-kappa-B and MAP kinase p38 pathways. May also play a role in the regulation of NADPH oxidase activity in eosinophil after stimulation with IL5, leukotriene B4 or PMA. In collagen-induced platelet aggregation, acts a negative regulator of filopodia formation and actin polymerization by interacting with and negatively regulating VASP phosphorylation. Downstream of PAR1, PAR4 and CD36/GP4 receptors, regulates differentially platelet dense granule secretion; acts as a positive regulator in PAR-mediated granule secretion, whereas it negatively regulates CD36/GP4-mediated granule release. Phosphorylates MUC1 in the C-terminal and regulates the interaction between MUC1 and beta-catenin. The catalytic subunit phosphorylates 14-3-3 proteins (YWHAB, YWHAZ and YWHAH) in a sphingosine-dependent fashion. Phosphorylates ELAVL1 in response to angiotensin-2 treatment. Phosphorylates mitochondrial phospholipid scramblase 3 (PLSCR3), resulting in increased cardiolipin expression on the mitochondrial outer membrane which facilitates apoptosis. Phosphorylates SMPD1 which induces SMPD1 secretion. The polypeptide is Protein kinase C delta type (Mus musculus (Mouse)).